The chain runs to 347 residues: Quinolinate synthase (347 aa).

Iminosuccinate contacts are provided by histidine 47 and serine 68. Cysteine 113 serves as a coordination point for [4Fe-4S] cluster. Iminosuccinate-binding positions include 139 to 141 and serine 156; that span reads YAN. A [4Fe-4S] cluster-binding site is contributed by cysteine 200. Residues 226–228 and threonine 243 each bind iminosuccinate; that span reads HPE. Cysteine 297 contributes to the [4Fe-4S] cluster binding site.

It belongs to the quinolinate synthase family. Type 1 subfamily. Requires [4Fe-4S] cluster as cofactor.

Its subcellular location is the cytoplasm. The catalysed reaction is iminosuccinate + dihydroxyacetone phosphate = quinolinate + phosphate + 2 H2O + H(+). It participates in cofactor biosynthesis; NAD(+) biosynthesis; quinolinate from iminoaspartate: step 1/1. Its function is as follows. Catalyzes the condensation of iminoaspartate with dihydroxyacetone phosphate to form quinolinate. The sequence is that of Quinolinate synthase from Escherichia coli O139:H28 (strain E24377A / ETEC).